The chain runs to 146 residues: Hemoglobin subunit beta (146 aa).

The residue at position 1 (alanine 1) is an N-acetylalanine. In terms of domain architecture, Globin spans 2 to 146 (SFDPHEKQLI…VAAALAAEYH (145 aa)). 2 residues coordinate heme b: histidine 63 and histidine 92.

This sequence belongs to the globin family. Heterotetramer of two alpha chains and two beta chains. Red blood cells.

In terms of biological role, involved in oxygen transport from the lung to the various peripheral tissues. This Crocodylus niloticus (Nile crocodile) protein is Hemoglobin subunit beta (HBB).